The following is a 162-amino-acid chain: Probable chemoreceptor glutamine deamidase CheD (162 aa).

The protein belongs to the CheD family.

It catalyses the reaction L-glutaminyl-[protein] + H2O = L-glutamyl-[protein] + NH4(+). Functionally, probably deamidates glutamine residues to glutamate on methyl-accepting chemotaxis receptors (MCPs), playing an important role in chemotaxis. This is Probable chemoreceptor glutamine deamidase CheD from Clostridium botulinum (strain Alaska E43 / Type E3).